A 311-amino-acid chain; its full sequence is Formimidoylglutamase (311 aa).

Mn(2+)-binding residues include His130, Asp155, His157, Asp159, Cys242, and Asp244.

It belongs to the arginase family. The cofactor is Mn(2+).

It carries out the reaction N-formimidoyl-L-glutamate + H2O = formamide + L-glutamate. It participates in amino-acid degradation; L-histidine degradation into L-glutamate; L-glutamate from N-formimidoyl-L-glutamate (hydrolase route): step 1/1. Catalyzes the conversion of N-formimidoyl-L-glutamate to L-glutamate and formamide. The sequence is that of Formimidoylglutamase from Staphylococcus aureus (strain MRSA252).